The primary structure comprises 217 residues: Vacuolar protein-sorting-associated protein 37 homolog 1 (217 aa).

The interval 1-49 (MFNFWGSKDQQQGQSRPQEASSQSPWYSPSLVSSPSSSRPQSSGQISAQ) is disordered. The span at 8–20 (KDQQQGQSRPQEA) shows a compositional bias: polar residues. The span at 21–47 (SSQSPWYSPSLVSSPSSSRPQSSGQIS) shows a compositional bias: low complexity. The VPS37 C-terminal domain maps to 137-217 (QEKLNELERQ…IHLAAKTSNI (81 aa)).

It belongs to the VPS37 family. As to quaternary structure, component of the endosomal sorting required for transport complex I (ESCRT-I), composed of ELC, VPS28 and VPS37. Interacts with ELC.

It localises to the endosome. Functionally, component of the ESCRT-I complex (endosomal sorting complex required for transport I), a regulator of vesicular trafficking process. Required for the sorting of endocytic ubiquitinated cargos into multivesicular bodies (MVBs). In Arabidopsis thaliana (Mouse-ear cress), this protein is Vacuolar protein-sorting-associated protein 37 homolog 1 (VPS37-1).